A 406-amino-acid chain; its full sequence is MKIGKKILIMLVTIFLTSLVALGVYATSIYNFSLGEFSKTFKDYGTGSGKDVIADEKPFSILLMGVDTGSSERTSKWEGNSDSMILVTVNPKTKKTTMTSLERDILVKLSGSKTNDQTGYDAKLNAAYAAGGAKMAIMTVQDMLDIKIDKYVQINMEGLVQLVDAVGGITVTNHFDFPISIEEHEPEFTASVEPGTHKINGEQALVYSRMRYDDPDGDYGRQKRQREVISKVLKKILALDSVSKYRKILSAVSKNMQTNIEISSSTIPKLLGYSDALKSIRTYQLKGEGTTIDGGSYQLVTSKELLKAQNRIKGQLGLKKSTAENLKTTASLYENFYGGDTSIYDSSSSASDYSSSGNYSGSSSDYGSSSSYGSNSSSGSSSDYSGQNSYNQGNYQQPAAGTGIGN.

The signal sequence occupies residues 1–26 (MKIGKKILIMLVTIFLTSLVALGVYA). A compositionally biased stretch (low complexity) spans 347–397 (SSSASDYSSSGNYSGSSSDYGSSSSYGSNSSSGSSSDYSGQNSYNQGNYQQ). Positions 347–406 (SSSASDYSSSGNYSGSSSDYGSSSSYGSNSSSGSSSDYSGQNSYNQGNYQQPAAGTGIGN) are disordered.

It belongs to the LytR/CpsA/Psr (LCP) family.

Its subcellular location is the cell envelope. In terms of biological role, involved in biofilm formation, cell division, autolysis and the regulation of acid and oxidative stress tolerance. May be associated with systemic virulence in blood. This chain is Biofilm regulatory protein A (brpA), found in Streptococcus mutans serotype c (strain ATCC 700610 / UA159).